A 156-amino-acid polypeptide reads, in one-letter code: MSINATLFVQAIVFLILVLFTMKFVWPPIAKALDERALKIADGLAAADKAKTDLAAANKRVEQELAQTRNETASRLADAERRAQAIIEEAKARASEEGNKIVAAARAEAEQQTVQAREALREQVAALAVKGAEQILRKEVDAGVHADLLNRLKTEL.

Residues 7–27 (LFVQAIVFLILVLFTMKFVWP) traverse the membrane as a helical segment.

The protein belongs to the ATPase B chain family. In terms of assembly, F-type ATPases have 2 components, F(1) - the catalytic core - and F(0) - the membrane proton channel. F(1) has five subunits: alpha(3), beta(3), gamma(1), delta(1), epsilon(1). F(0) has three main subunits: a(1), b(2) and c(10-14). The alpha and beta chains form an alternating ring which encloses part of the gamma chain. F(1) is attached to F(0) by a central stalk formed by the gamma and epsilon chains, while a peripheral stalk is formed by the delta and b chains.

The protein localises to the cell inner membrane. In terms of biological role, f(1)F(0) ATP synthase produces ATP from ADP in the presence of a proton or sodium gradient. F-type ATPases consist of two structural domains, F(1) containing the extramembraneous catalytic core and F(0) containing the membrane proton channel, linked together by a central stalk and a peripheral stalk. During catalysis, ATP synthesis in the catalytic domain of F(1) is coupled via a rotary mechanism of the central stalk subunits to proton translocation. Its function is as follows. Component of the F(0) channel, it forms part of the peripheral stalk, linking F(1) to F(0). The chain is ATP synthase subunit b from Delftia acidovorans (strain DSM 14801 / SPH-1).